Reading from the N-terminus, the 334-residue chain is MQEVEKLKLLQSEREALKSRIKVKEQEKKAENHTETVCPECGGRQLVHDYERAELVCQSCGLVIDDDFIDRGPEWRAFDHDQRMKRSRVGAPMTFTIHDKGLSTMIDWRNRDSYGRAISSKNRAQLYRLRKWQRRIRVSNATERNLAFALSELDRMASALGLPRNVRETAAVVYRDAVDKNLIRGRSIEGVAAAALYAACRQCSVPRTLDEIAEVSRVSRKEIGRTYRFISRELGLKLLPTSPIDYVPRFCSGLTLKGEVQSRAVEILRQAGERELTSGRGPTGVAAAAIYISSILGGERRTQREVAEVAGVTEVTIRNRYKELAEKLDIEIIL.

Residues 34–65 (TETVCPECGGRQLVHDYERAELVCQSCGLVID) form a TFIIB-type zinc finger. Cysteine 38, cysteine 41, cysteine 57, and cysteine 60 together coordinate Zn(2+). 2 repeat units span residues 151–234 (SELD…SREL) and 245–326 (DYVP…ELAE).

This sequence belongs to the TFIIB family.

In terms of biological role, stabilizes TBP binding to an archaeal box-A promoter. Also responsible for recruiting RNA polymerase II to the pre-initiation complex (DNA-TBP-TFIIB). The protein is Transcription initiation factor IIB of Methanoregula boonei (strain DSM 21154 / JCM 14090 / 6A8).